The following is a 337-amino-acid chain: DNA-directed RNA polymerase subunit alpha (337 aa).

The segment at 1-231 is alpha N-terminal domain (alpha-NTD); sequence MRNITTSAYT…KQLSVFDKIT (231 aa). Residues 248–337 are alpha C-terminal domain (alpha-CTD); that stretch reads NTKLLQNITD…IAELKAQNEG (90 aa).

Belongs to the RNA polymerase alpha chain family. In terms of assembly, homodimer. The RNAP catalytic core consists of 2 alpha, 1 beta, 1 beta' and 1 omega subunit. When a sigma factor is associated with the core the holoenzyme is formed, which can initiate transcription.

It carries out the reaction RNA(n) + a ribonucleoside 5'-triphosphate = RNA(n+1) + diphosphate. DNA-dependent RNA polymerase catalyzes the transcription of DNA into RNA using the four ribonucleoside triphosphates as substrates. This chain is DNA-directed RNA polymerase subunit alpha, found in Campylobacter jejuni subsp. jejuni serotype O:6 (strain 81116 / NCTC 11828).